Consider the following 177-residue polypeptide: Large ribosomal subunit protein uL6 (177 aa).

This sequence belongs to the universal ribosomal protein uL6 family. Part of the 50S ribosomal subunit.

This protein binds to the 23S rRNA, and is important in its secondary structure. It is located near the subunit interface in the base of the L7/L12 stalk, and near the tRNA binding site of the peptidyltransferase center. In Methylobacterium sp. (strain 4-46), this protein is Large ribosomal subunit protein uL6.